A 393-amino-acid chain; its full sequence is ATP phosphoribosyltransferase regulatory subunit (393 aa).

It belongs to the class-II aminoacyl-tRNA synthetase family. HisZ subfamily. Heteromultimer composed of HisG and HisZ subunits.

Its subcellular location is the cytoplasm. It functions in the pathway amino-acid biosynthesis; L-histidine biosynthesis; L-histidine from 5-phospho-alpha-D-ribose 1-diphosphate: step 1/9. Functionally, required for the first step of histidine biosynthesis. May allow the feedback regulation of ATP phosphoribosyltransferase activity by histidine. This Nitrosospira multiformis (strain ATCC 25196 / NCIMB 11849 / C 71) protein is ATP phosphoribosyltransferase regulatory subunit.